We begin with the raw amino-acid sequence, 258 residues long: Phosphate import ATP-binding protein PstB 1 (258 aa).

Residues L5 to K247 enclose the ABC transporter domain. G37–T44 is a binding site for ATP.

This sequence belongs to the ABC transporter superfamily. Phosphate importer (TC 3.A.1.7) family. In terms of assembly, the complex is composed of two ATP-binding proteins (PstB), two transmembrane proteins (PstC and PstA) and a solute-binding protein (PstS).

Its subcellular location is the cell membrane. The catalysed reaction is phosphate(out) + ATP + H2O = ADP + 2 phosphate(in) + H(+). Functionally, part of the ABC transporter complex PstSACB involved in phosphate import. Responsible for energy coupling to the transport system. The chain is Phosphate import ATP-binding protein PstB 1 from Mycobacterium bovis (strain ATCC BAA-935 / AF2122/97).